A 236-amino-acid polypeptide reads, in one-letter code: Ribosome-inactivating protein saporin-3 (236 aa).

Residue Glu-148 is part of the active site.

It belongs to the ribosome-inactivating protein family. Type 1 RIP subfamily.

The enzyme catalyses Endohydrolysis of the N-glycosidic bond at one specific adenosine on the 28S rRNA.. Functionally, ribosome-inactivating protein of type 1, inhibits protein synthesis in animal cells. Useful as immunotoxin for pharmacological applications. This is Ribosome-inactivating protein saporin-3 (SAP3) from Saponaria officinalis (Common soapwort).